A 659-amino-acid chain; its full sequence is Cytochrome bo(3) ubiquinol oxidase subunit 1 (659 aa).

The Extracellular portion of the chain corresponds to 1-14 (MFGKLSLNSIPYHD). A helical transmembrane segment spans residues 15-35 (PIIMITCCVVILVFLVISIII). The Cytoplasmic portion of the chain corresponds to 36–56 (TIAQKWQYLWNEWCCTVDHKK). Residues 57 to 77 (IAKMYIFLAFIMLFRGFADAI) form a helical membrane-spanning segment. A ubiquinone contacts are provided by Arg-71, Asp-75, and His-101. Over 78–109 (MMRMQQFLVSSYHGNGTGFLPPHHYDQIFTAH) the chain is Extracellular. His-109 serves as a coordination point for heme b. A helical membrane pass occupies residues 110 to 130 (GVIMIFFVAMPLVIGLMNFVV). Topologically, residues 131–148 (PLQIGSRDVAFPFLNNLS) are cytoplasmic. The chain crosses the membrane as a helical span at residues 149–169 (LWLTIFSALLMNVSLGIGEFA). The Extracellular portion of the chain corresponds to 170–192 (QTGWLAYPPLSELQYSPGVGVDY). Trp-173 provides a ligand contact to heme b. A helical membrane pass occupies residues 193 to 213 (WIWSLQISGIGTTLTAINFLV). Residues 214–235 (TIIKMRSSGMNWFKIPVFTWTS) lie on the Cytoplasmic side of the membrane. The chain crosses the membrane as a helical span at residues 236-256 (FCTNILIIASFPVLTVSLLLL). Residues 257 to 280 (TLDRYLGFHFFTNDFGGNMMMYVN) are Extracellular-facing. The chain crosses the membrane as a helical span at residues 281–301 (LIWIWGHPEVYILILPVFGIF). A Cu(2+)-binding site is contributed by His-287. Positions 287-291 (HPEVY) form a cross-link, 1'-histidyl-3'-tyrosine (His-Tyr). Tyr-291 provides a ligand contact to Fe(II)-heme o. Over 302-318 (SEVVATFSSKELFGYTS) the chain is Cytoplasmic. A helical membrane pass occupies residues 319–339 (LIWATIVITILSFIVWLHHFF). Positions 336 and 337 each coordinate Cu(2+). At 340-350 (TMGASANVNAF) the chain is on the extracellular side. Residues 351–371 (FGITTMIISIPTGVKIFNWLF) traverse the membrane as a helical segment. The Cytoplasmic portion of the chain corresponds to 372–382 (TMYRGNVRINS). A helical transmembrane segment spans residues 383–403 (IMLWTIGFLITFSIGGMAGVL). Residues 404–416 (LSLPVIDFSLHNS) lie on the Extracellular side of the membrane. Residues His-414 and His-422 each contribute to the Fe(II)-heme o site. A helical transmembrane segment spans residues 417-437 (LFLVAHFHNVIIGGVVFGCFA). Residue His-424 participates in heme b binding. The Cytoplasmic segment spans residues 438–459 (GITYWFPKLFGFMLSEKWGKRA). A helical transmembrane segment spans residues 460–480 (FWCWFFGFFCAFMPLYALGLM). At 481–499 (GMTRRLSQNINPQFHSMLT) the chain is on the extracellular side. The heme b site is built by Arg-484 and Arg-485. A helical membrane pass occupies residues 500–520 (IAALGTILIFIGIVFQIIQIF). The Cytoplasmic segment spans residues 521 to 587 (VSIRDRNLNR…KLPILYTSFH (67 aa)). The helical transmembrane segment at 588–608 (MPKNTKFGFLIGFFAFLLGFS) threads the bilayer. Ala-609 is a topological domain (extracellular). Residues 610-630 (VWYIFWLFFISFFVIIYLLVI) traverse the membrane as a helical segment. The Cytoplasmic portion of the chain corresponds to 631–659 (KSLDTNCDYIISIEEIKEIEKCINIKKMD).

This sequence belongs to the heme-copper respiratory oxidase family. The cytochrome bo(3) ubiquinol oxidase complex is a heterooctamer of two A chains, two B chains, two C chains and two D chains. The cofactor is Cu(2+). Heme b serves as cofactor. Requires Fe(II)-heme o as cofactor.

It is found in the cell membrane. It catalyses the reaction 2 a ubiquinol + O2 + n H(+)(in) = 2 a ubiquinone + 2 H2O + n H(+)(out). In terms of biological role, cytochrome bo(3) ubiquinol oxidase is the terminal enzyme in the aerobic respiratory chain. Catalyzes the four-electron reduction of O2 to water, using a ubiquinol as a membrane soluble electron donor for molecular oxygen reduction. Has proton pump activity across the membrane in addition to electron transfer, pumping 2 protons/electron and generating a proton motive force. All the redox centers of this enzyme complex are located within the largest subunit, subunit I. Protons are probably pumped via D- and K- channels found in this subunit. This is Cytochrome bo(3) ubiquinol oxidase subunit 1 (cyoB) from Buchnera aphidicola subsp. Baizongia pistaciae (strain Bp).